The chain runs to 379 residues: MLDHPLNSLGFAKPPAATRVVVAMSGGVDSSVVAAELAAEGYDVVGVTLQLYDHGAALAKKGACCAGRDIHDARRVAETMGFPHYVLDYENTFREAVIDEFADAYLAGATPVPCIRCNERVKFKDLLQTAKDLDADCMATGHYIQRKMGPAGPELHCAADPARDQSYFLFSTTPEQLAFLRFPLGHLASKAETRALAARHGLPVADKPDSQDICFVPNGNYAEVIQKLRPGAADPGEIVDLSGRVLGEHRGVIHYTIGQRRGLGIGGLGDPLYVVRLDPERRQVIVGPKEALSTRIVPVREINWLGDAPLTSRSEWQVMAKVRSTRASREAVIRPLSDTEAEVELIAPEDGVSPGQACVFYAPGDSRILGGGWIWRGAR.

ATP-binding positions include 23–30 (AMSGGVDS) and Leu49. Cys117 acts as the Nucleophile in catalysis. A disulfide bridge connects residues Cys117 and Cys214. Gly141 contacts ATP. An interaction with tRNA region spans residues 163-165 (RDQ). Cys214 serves as the catalytic Cysteine persulfide intermediate.

It belongs to the MnmA/TRMU family.

It is found in the cytoplasm. The enzyme catalyses S-sulfanyl-L-cysteinyl-[protein] + uridine(34) in tRNA + AH2 + ATP = 2-thiouridine(34) in tRNA + L-cysteinyl-[protein] + A + AMP + diphosphate + H(+). Functionally, catalyzes the 2-thiolation of uridine at the wobble position (U34) of tRNA, leading to the formation of s(2)U34. The protein is tRNA-specific 2-thiouridylase MnmA of Cereibacter sphaeroides (strain KD131 / KCTC 12085) (Rhodobacter sphaeroides).